The chain runs to 375 residues: Carbamoyl phosphate synthase small chain (375 aa).

The CPSase stretch occupies residues 1-186 (MKAILALEDG…IVDGTYAWPG (186 aa)). Residues S45, G238, and G240 each contribute to the L-glutamine site. The region spanning 190 to 375 (RLVVFDMGIK…RNLVRKETGK (186 aa)) is the Glutamine amidotransferase type-1 domain. The active-site Nucleophile is the C265. Residues L266, Q269, N307, G309, and F310 each contribute to the L-glutamine site. Residues H348 and E350 contribute to the active site.

Belongs to the CarA family. As to quaternary structure, composed of two chains; the small (or glutamine) chain promotes the hydrolysis of glutamine to ammonia, which is used by the large (or ammonia) chain to synthesize carbamoyl phosphate. Tetramer of heterodimers (alpha,beta)4.

It catalyses the reaction hydrogencarbonate + L-glutamine + 2 ATP + H2O = carbamoyl phosphate + L-glutamate + 2 ADP + phosphate + 2 H(+). The enzyme catalyses L-glutamine + H2O = L-glutamate + NH4(+). The protein operates within amino-acid biosynthesis; L-arginine biosynthesis; carbamoyl phosphate from bicarbonate: step 1/1. It functions in the pathway pyrimidine metabolism; UMP biosynthesis via de novo pathway; (S)-dihydroorotate from bicarbonate: step 1/3. Functionally, small subunit of the glutamine-dependent carbamoyl phosphate synthetase (CPSase). CPSase catalyzes the formation of carbamoyl phosphate from the ammonia moiety of glutamine, carbonate, and phosphate donated by ATP, constituting the first step of 2 biosynthetic pathways, one leading to arginine and/or urea and the other to pyrimidine nucleotides. The small subunit (glutamine amidotransferase) binds and cleaves glutamine to supply the large subunit with the substrate ammonia. The protein is Carbamoyl phosphate synthase small chain of Solidesulfovibrio magneticus (strain ATCC 700980 / DSM 13731 / RS-1) (Desulfovibrio magneticus).